The following is a 336-amino-acid chain: MILLEKTQEKKINDKEELIVKEEVETNWDYGCNPYERKIEDLIKYGVVVVDKPRGPTSHEVSTWVKKILNLDKAGHGGTLDPKVTGVLPVALERATKTIPMWHIPPKEYVCLMHLHRDASEEDILRVFKEFTGRIYQRPPLKAAVKRRLRIRKIHELELLDKDGKDVLFRVKCQSGTYIRKLCEDIGEALGTSAHMQELRRTKSGCFEEKDAVYLQDLLDAYVFWKEDGDEEELRRVIKPMEYGLRHLKKVVVKDSAVDAICHGADVYVRGIAKLSKGIGKGETVLVETLKGEAVAVGKALMNTKEILNADKGVAVDVERVYMDRGTYPRMWKRKK.

Asp-81 serves as the catalytic Nucleophile. A PUA domain is found at 248-323; sequence LKKVVVKDSA…VAVDVERVYM (76 aa).

Belongs to the pseudouridine synthase TruB family. Type 2 subfamily.

It catalyses the reaction uridine(55) in tRNA = pseudouridine(55) in tRNA. In terms of biological role, could be responsible for synthesis of pseudouridine from uracil-55 in the psi GC loop of transfer RNAs. This Methanocaldococcus jannaschii (strain ATCC 43067 / DSM 2661 / JAL-1 / JCM 10045 / NBRC 100440) (Methanococcus jannaschii) protein is Probable tRNA pseudouridine synthase B.